The primary structure comprises 341 residues: Phosphoribosylformylglycinamidine cyclo-ligase (341 aa).

The protein belongs to the AIR synthase family.

The protein resides in the cytoplasm. It carries out the reaction 2-formamido-N(1)-(5-O-phospho-beta-D-ribosyl)acetamidine + ATP = 5-amino-1-(5-phospho-beta-D-ribosyl)imidazole + ADP + phosphate + H(+). The protein operates within purine metabolism; IMP biosynthesis via de novo pathway; 5-amino-1-(5-phospho-D-ribosyl)imidazole from N(2)-formyl-N(1)-(5-phospho-D-ribosyl)glycinamide: step 2/2. The sequence is that of Phosphoribosylformylglycinamidine cyclo-ligase from Caldicellulosiruptor saccharolyticus (strain ATCC 43494 / DSM 8903 / Tp8T 6331).